A 492-amino-acid polypeptide reads, in one-letter code: Ketol-acid reductoisomerase (NADP(+)) (492 aa).

One can recognise a KARI N-terminal Rossmann domain in the interval alanine 15–phenylalanine 208. NADP(+) contacts are provided by residues cysteine 45–glutamine 48, arginine 68, arginine 76, serine 78, and aspartate 108–glutamine 110. The active site involves histidine 132. Glycine 158 contacts NADP(+). 2 KARI C-terminal knotted domains span residues serine 209–glutamine 344 and phenylalanine 345–methionine 485. Mg(2+)-binding residues include aspartate 217, glutamate 221, glutamate 389, and glutamate 393. Residue serine 414 coordinates substrate.

It belongs to the ketol-acid reductoisomerase family. Mg(2+) is required as a cofactor.

It catalyses the reaction (2R)-2,3-dihydroxy-3-methylbutanoate + NADP(+) = (2S)-2-acetolactate + NADPH + H(+). The catalysed reaction is (2R,3R)-2,3-dihydroxy-3-methylpentanoate + NADP(+) = (S)-2-ethyl-2-hydroxy-3-oxobutanoate + NADPH + H(+). The protein operates within amino-acid biosynthesis; L-isoleucine biosynthesis; L-isoleucine from 2-oxobutanoate: step 2/4. It participates in amino-acid biosynthesis; L-valine biosynthesis; L-valine from pyruvate: step 2/4. In terms of biological role, involved in the biosynthesis of branched-chain amino acids (BCAA). Catalyzes an alkyl-migration followed by a ketol-acid reduction of (S)-2-acetolactate (S2AL) to yield (R)-2,3-dihydroxy-isovalerate. In the isomerase reaction, S2AL is rearranged via a Mg-dependent methyl migration to produce 3-hydroxy-3-methyl-2-ketobutyrate (HMKB). In the reductase reaction, this 2-ketoacid undergoes a metal-dependent reduction by NADPH to yield (R)-2,3-dihydroxy-isovalerate. The chain is Ketol-acid reductoisomerase (NADP(+)) from Yersinia pestis bv. Antiqua (strain Antiqua).